We begin with the raw amino-acid sequence, 122 residues long: Non-specific lipid-transfer protein (122 aa).

The N-terminal stretch at 1-19 (MGVSRACFVVMVVVYMVVA) is a signal peptide. Residues 20–29 (ATPNVKLAEA) constitute a propeptide that is removed on maturation. Intrachain disulfides connect C32–C81, C42–C58, C59–C104, and C79–C118.

In terms of assembly, monomer.

Its function is as follows. Plant non-specific lipid-transfer proteins transfer phospholipids as well as galactolipids across membranes. May play a role in wax or cutin deposition in the cell walls of expanding epidermal cells and certain secretory tissues. Binds saturated fatty acids, unsaturated fatty acids, lysolipids and, with highest efficiency, jasmonic acid. Has weak antimicrobial activity against fungi. Inhibits spore germination and hyphae elongation in A.niger VKM F-2259 and N.crassa VKM F-184. Has no antibacterial activity against A.tumefaciens A281, C.michiganensis VKM Ac-144 and P.syringae VKM B-1546. This is Non-specific lipid-transfer protein from Anethum graveolens (Dill).